We begin with the raw amino-acid sequence, 245 residues long: Transcriptional regulatory protein VxrB (245 aa).

The 112-residue stretch at 31–142 (TLLLVEDDKN…ELFARIRAQL (112 aa)) folds into the Response regulatory domain. At Asp78 the chain carries 4-aspartylphosphate. A DNA-binding region (ompR/PhoB-type) is located at residues 151-245 (DSKVVTSNLT…LRGVGYKMKA (95 aa)).

Post-translationally, phosphorylated by VxrA.

It is found in the cytoplasm. Functionally, member of the two-component regulatory system VxrB/VxrA involved in the regulation of diverses processes, including virulence, the type VI secretion system (T6SS) and biofilm formation. VxrB positively regulates the expression of the T6SS, a virulence nanomachine that directly translocates effectors into bacterial or host cells, thereby facilitating colonization by competing with sister cells and intestinal microbiota. In addition, it activates vpsL expression and biofilm formation, and represses motility. May regulate biofilm formation via its regulation of key biofilm regulators and cyclic di-GMP levels. Significantly contributes to both attack and defense via T6SS, while also influencing competition via regulation of biofilm matrix production. Is critical for colonization in the infant mouse model. The chain is Transcriptional regulatory protein VxrB from Vibrio cholerae serotype O1 (strain ATCC 39315 / El Tor Inaba N16961).